A 434-amino-acid polypeptide reads, in one-letter code: Homogentisate 1,2-dioxygenase (434 aa).

The active-site Proton acceptor is the histidine 289. Residues histidine 332 and glutamate 338 each coordinate Fe cation. Residues tyrosine 347 and histidine 368 each coordinate homogentisate. Histidine 368 contributes to the Fe cation binding site.

The protein belongs to the homogentisate dioxygenase family. In terms of assembly, hexamer; dimer of trimers. Fe cation serves as cofactor.

It carries out the reaction homogentisate + O2 = 4-maleylacetoacetate + H(+). It functions in the pathway amino-acid degradation; L-phenylalanine degradation; acetoacetate and fumarate from L-phenylalanine: step 4/6. Functionally, involved in the catabolism of homogentisate (2,5-dihydroxyphenylacetate or 2,5-OH-PhAc), a central intermediate in the degradation of phenylalanine and tyrosine. Catalyzes the oxidative ring cleavage of the aromatic ring of homogentisate to yield maleylacetoacetate. This Pseudomonas syringae pv. syringae (strain B728a) protein is Homogentisate 1,2-dioxygenase.